Consider the following 271-residue polypeptide: Regulatory protein RecX (271 aa).

It belongs to the RecX family.

Its subcellular location is the cytoplasm. Functionally, modulates RecA activity. This is Regulatory protein RecX from Lactobacillus gasseri (strain ATCC 33323 / DSM 20243 / BCRC 14619 / CIP 102991 / JCM 1131 / KCTC 3163 / NCIMB 11718 / NCTC 13722 / AM63).